A 425-amino-acid chain; its full sequence is Serine--tRNA ligase (425 aa).

An L-serine-binding site is contributed by 228–230 (TAE). Position 259–261 (259–261 (RSE)) interacts with ATP. Glu-282 contacts L-serine. 346–349 (EIAS) contributes to the ATP binding site. Ser-382 contacts L-serine.

Belongs to the class-II aminoacyl-tRNA synthetase family. Type-1 seryl-tRNA synthetase subfamily. In terms of assembly, homodimer. The tRNA molecule binds across the dimer.

It localises to the cytoplasm. The enzyme catalyses tRNA(Ser) + L-serine + ATP = L-seryl-tRNA(Ser) + AMP + diphosphate + H(+). The catalysed reaction is tRNA(Sec) + L-serine + ATP = L-seryl-tRNA(Sec) + AMP + diphosphate + H(+). It participates in aminoacyl-tRNA biosynthesis; selenocysteinyl-tRNA(Sec) biosynthesis; L-seryl-tRNA(Sec) from L-serine and tRNA(Sec): step 1/1. Functionally, catalyzes the attachment of serine to tRNA(Ser). Is also able to aminoacylate tRNA(Sec) with serine, to form the misacylated tRNA L-seryl-tRNA(Sec), which will be further converted into selenocysteinyl-tRNA(Sec). This is Serine--tRNA ligase from Rickettsia felis (strain ATCC VR-1525 / URRWXCal2) (Rickettsia azadi).